Reading from the N-terminus, the 79-residue chain is Conotoxin 12 (79 aa).

A signal peptide spans 1-22 (MKLTCVLIITVLFLTASQLITA). Positions 23-47 (DYSRDQRQYRAVRLGDEMRNFKGAR) are excised as a propeptide. 3 disulfides stabilise this stretch: Cys-49–Cys-62, Cys-56–Cys-67, and Cys-61–Cys-77.

Belongs to the conotoxin O1 superfamily. In terms of tissue distribution, expressed by the venom duct.

The protein localises to the secreted. This is Conotoxin 12 from Conus vexillum (Flag cone).